Consider the following 368-residue polypeptide: Probable dual-specificity RNA methyltransferase RlmN (368 aa).

The active-site Proton acceptor is the Glu-100. Positions 106–344 constitute a Radical SAM core domain; sequence QYYGLSVCVT…CVVRQEHGTD (239 aa). Cysteines 113 and 349 form a disulfide. [4Fe-4S] cluster is bound by residues Cys-120, Cys-124, and Cys-127. Residues 172–173, Ser-204, 227–229, and Asn-305 each bind S-adenosyl-L-methionine; these read GE and SLH. The active-site S-methylcysteine intermediate is the Cys-349.

It belongs to the radical SAM superfamily. RlmN family. [4Fe-4S] cluster serves as cofactor.

The protein resides in the cytoplasm. It catalyses the reaction adenosine(2503) in 23S rRNA + 2 reduced [2Fe-2S]-[ferredoxin] + 2 S-adenosyl-L-methionine = 2-methyladenosine(2503) in 23S rRNA + 5'-deoxyadenosine + L-methionine + 2 oxidized [2Fe-2S]-[ferredoxin] + S-adenosyl-L-homocysteine. The catalysed reaction is adenosine(37) in tRNA + 2 reduced [2Fe-2S]-[ferredoxin] + 2 S-adenosyl-L-methionine = 2-methyladenosine(37) in tRNA + 5'-deoxyadenosine + L-methionine + 2 oxidized [2Fe-2S]-[ferredoxin] + S-adenosyl-L-homocysteine. Specifically methylates position 2 of adenine 2503 in 23S rRNA and position 2 of adenine 37 in tRNAs. The protein is Probable dual-specificity RNA methyltransferase RlmN of Streptococcus agalactiae serotype III (strain NEM316).